A 465-amino-acid polypeptide reads, in one-letter code: Cysteine--tRNA ligase (465 aa).

Cys-30 lines the Zn(2+) pocket. Positions 32-42 (ITVYDYCHIGH) match the 'HIGH' region motif. 3 residues coordinate Zn(2+): Cys-214, His-239, and Glu-243. Positions 271–275 (KMSKS) match the 'KMSKS' region motif. Residue Lys-274 participates in ATP binding.

Belongs to the class-I aminoacyl-tRNA synthetase family. Monomer. Requires Zn(2+) as cofactor.

Its subcellular location is the cytoplasm. It carries out the reaction tRNA(Cys) + L-cysteine + ATP = L-cysteinyl-tRNA(Cys) + AMP + diphosphate. The chain is Cysteine--tRNA ligase from Burkholderia thailandensis (strain ATCC 700388 / DSM 13276 / CCUG 48851 / CIP 106301 / E264).